A 358-amino-acid chain; its full sequence is Sesquiterpene synthase Agr3 (358 aa).

4 residues coordinate Mg(2+): Asp99, Asn246, Ser250, and Glu254. Residues 99–103 (DNISD) carry the DDXXD motif motif. (2E,6E)-farnesyl diphosphate is bound by residues Arg334 and Tyr335.

This sequence belongs to the terpene synthase family. Requires Mg(2+) as cofactor.

The catalysed reaction is (2E,6E)-farnesyl diphosphate = alpha-muurolene + diphosphate. The enzyme catalyses (2E,6E)-farnesyl diphosphate = gamma-muurolene + diphosphate. It carries out the reaction (2E,6E)-farnesyl diphosphate = delta-cadinene + diphosphate. Functionally, terpene cyclase that catalyzes the cyclization of farnesyl diphosphate (FPP) to various sesquiterpenes, including alpha-muurolene, gamma-muurolene, germacrene, delta-cadinene, delta-cadinol and cubenol. The chain is Sesquiterpene synthase Agr3 from Cyclocybe aegerita (Black poplar mushroom).